A 42-amino-acid polypeptide reads, in one-letter code: Gastric inhibitory polypeptide (42 aa).

It belongs to the glucagon family.

The protein resides in the secreted. Potent stimulator of insulin secretion and relatively poor inhibitor of gastric acid secretion. This is Gastric inhibitory polypeptide (GIP) from Sus scrofa (Pig).